A 90-amino-acid chain; its full sequence is MATRIRLKRLGMKKAPFYRVVVADSRSPRDGRFIEEIGYYNPTKEPAILQIDEEKAIKWLSSGAQPSDTVKALLNKAGILDKMAEKKAQA.

The protein belongs to the bacterial ribosomal protein bS16 family.

The protein is Small ribosomal subunit protein bS16 of Heliobacterium modesticaldum (strain ATCC 51547 / Ice1).